A 212-amino-acid polypeptide reads, in one-letter code: Ribonuclease HII (212 aa).

The 185-residue stretch at 28–212 (SIIAGVDEVG…KSFAPIRQVV (185 aa)) folds into the RNase H type-2 domain. 3 residues coordinate a divalent metal cation: D34, E35, and D127.

The protein belongs to the RNase HII family. Requires Mn(2+) as cofactor. Mg(2+) is required as a cofactor.

It is found in the cytoplasm. It catalyses the reaction Endonucleolytic cleavage to 5'-phosphomonoester.. Functionally, endonuclease that specifically degrades the RNA of RNA-DNA hybrids. The chain is Ribonuclease HII from Chlamydia caviae (strain ATCC VR-813 / DSM 19441 / 03DC25 / GPIC) (Chlamydophila caviae).